A 59-amino-acid polypeptide reads, in one-letter code: uncharacterized protein (59 aa).

Residues 7–27 (LLLLVAIALISAFALTVTGVV) traverse the membrane as a helical segment.

The protein resides in the membrane. This is an uncharacterized protein from Pyrobaculum aerophilum (strain ATCC 51768 / DSM 7523 / JCM 9630 / CIP 104966 / NBRC 100827 / IM2).